The following is a 249-amino-acid chain: Glucosamine-6-phosphate deaminase (249 aa).

Catalysis depends on aspartate 67, which acts as the Proton acceptor; for enolization step. Asparagine 136 functions as the For ring-opening step in the catalytic mechanism. Histidine 138 acts as the Proton acceptor; for ring-opening step in catalysis. The active-site For ring-opening step is the glutamate 143.

This sequence belongs to the glucosamine/galactosamine-6-phosphate isomerase family. NagB subfamily.

It carries out the reaction alpha-D-glucosamine 6-phosphate + H2O = beta-D-fructose 6-phosphate + NH4(+). The protein operates within amino-sugar metabolism; N-acetylneuraminate degradation; D-fructose 6-phosphate from N-acetylneuraminate: step 5/5. Functionally, catalyzes the reversible isomerization-deamination of glucosamine 6-phosphate (GlcN6P) to form fructose 6-phosphate (Fru6P) and ammonium ion. The chain is Glucosamine-6-phosphate deaminase from Clostridium botulinum (strain Eklund 17B / Type B).